Here is a 154-residue protein sequence, read N- to C-terminus: MYYYLITLAVIALDQLTKWIVVQNMEIGQKIEVIPGFLYWTSYRNDGAAWSILEGHMWFFYLITVVVIGIIIYIMQKYAKGKRLFSISLAFILGGAIGNFIDRVLHQEVVDFVQTVWGNYYFPIFNVADASLSVGVVLMLVYVFVDDRKTKGIK.

2 helical membrane-spanning segments follow: residues 55-75 and 84-104; these read GHMW…IYIM and LFSI…IDRV. Residues D111 and D129 contribute to the active site. A helical membrane pass occupies residues 124-144; it reads IFNVADASLSVGVVLMLVYVF.

Belongs to the peptidase A8 family.

It is found in the cell membrane. It catalyses the reaction Release of signal peptides from bacterial membrane prolipoproteins. Hydrolyzes -Xaa-Yaa-Zaa-|-(S,diacylglyceryl)Cys-, in which Xaa is hydrophobic (preferably Leu), and Yaa (Ala or Ser) and Zaa (Gly or Ala) have small, neutral side chains.. Its pathway is protein modification; lipoprotein biosynthesis (signal peptide cleavage). In terms of biological role, this protein specifically catalyzes the removal of signal peptides from prolipoproteins. This is Lipoprotein signal peptidase from Listeria monocytogenes serovar 1/2a (strain ATCC BAA-679 / EGD-e).